We begin with the raw amino-acid sequence, 101 residues long: Apolipoprotein C-II (101 aa).

An N-terminal signal peptide occupies residues 1 to 22; that stretch reads MGTRYFLVGFLILLVLGFEAQG. The lipid binding stretch occupies residues 66-74; the sequence is TVDEKIRDI. Positions 78 to 101 are lipoprotein lipase cofactor; sequence STAAVTTYAGIITDQVFSILSGED.

The protein belongs to the apolipoprotein C2 family. In terms of processing, proapolipoprotein C-II is synthesized as a sialic acid containing glycoprotein which is subsequently desialylated prior to its proteolytic processing. Proapolipoprotein C-II, the major form found in plasma undergoes proteolytic cleavage of its N-terminal hexapeptide to generate apolipoprotein C-II, which occurs as the minor form in plasma.

The protein localises to the secreted. Functionally, component of chylomicrons, very low-density lipoproteins (VLDL), low-density lipoproteins (LDL), and high-density lipoproteins (HDL) in plasma. Plays an important role in lipoprotein metabolism as an activator of lipoprotein lipase. Both proapolipoprotein C-II and apolipoprotein C-II can activate lipoprotein lipase. The protein is Apolipoprotein C-II (APOC2) of Capra hircus aegagrus (Wild goat).